Here is a 388-residue protein sequence, read N- to C-terminus: Lipid-A-disaccharide synthase (388 aa).

The protein belongs to the LpxB family.

The enzyme catalyses a lipid X + a UDP-2-N,3-O-bis[(3R)-3-hydroxyacyl]-alpha-D-glucosamine = a lipid A disaccharide + UDP + H(+). It functions in the pathway bacterial outer membrane biogenesis; LPS lipid A biosynthesis. In terms of biological role, condensation of UDP-2,3-diacylglucosamine and 2,3-diacylglucosamine-1-phosphate to form lipid A disaccharide, a precursor of lipid A, a phosphorylated glycolipid that anchors the lipopolysaccharide to the outer membrane of the cell. In Burkholderia pseudomallei (strain 1710b), this protein is Lipid-A-disaccharide synthase.